The sequence spans 104 residues: Urease subunit beta (104 aa).

Belongs to the urease beta subunit family. In terms of assembly, heterotrimer of UreA (gamma), UreB (beta) and UreC (alpha) subunits. Three heterotrimers associate to form the active enzyme.

It is found in the cytoplasm. The enzyme catalyses urea + 2 H2O + H(+) = hydrogencarbonate + 2 NH4(+). The protein operates within nitrogen metabolism; urea degradation; CO(2) and NH(3) from urea (urease route): step 1/1. This chain is Urease subunit beta, found in Methylocella silvestris (strain DSM 15510 / CIP 108128 / LMG 27833 / NCIMB 13906 / BL2).